The primary structure comprises 235 residues: Large ribosomal subunit protein uL1 (235 aa).

It belongs to the universal ribosomal protein uL1 family. In terms of assembly, part of the 50S ribosomal subunit.

In terms of biological role, binds directly to 23S rRNA. The L1 stalk is quite mobile in the ribosome, and is involved in E site tRNA release. Protein L1 is also a translational repressor protein, it controls the translation of the L11 operon by binding to its mRNA. The protein is Large ribosomal subunit protein uL1 of Fusobacterium nucleatum subsp. nucleatum (strain ATCC 25586 / DSM 15643 / BCRC 10681 / CIP 101130 / JCM 8532 / KCTC 2640 / LMG 13131 / VPI 4355).